Consider the following 284-residue polypeptide: Bifunctional protein FolD (284 aa).

NADP(+)-binding positions include 166–168 and Ile232; that span reads GAS.

Belongs to the tetrahydrofolate dehydrogenase/cyclohydrolase family. In terms of assembly, homodimer.

The catalysed reaction is (6R)-5,10-methylene-5,6,7,8-tetrahydrofolate + NADP(+) = (6R)-5,10-methenyltetrahydrofolate + NADPH. It carries out the reaction (6R)-5,10-methenyltetrahydrofolate + H2O = (6R)-10-formyltetrahydrofolate + H(+). It functions in the pathway one-carbon metabolism; tetrahydrofolate interconversion. In terms of biological role, catalyzes the oxidation of 5,10-methylenetetrahydrofolate to 5,10-methenyltetrahydrofolate and then the hydrolysis of 5,10-methenyltetrahydrofolate to 10-formyltetrahydrofolate. The chain is Bifunctional protein FolD from Pseudomonas putida (strain W619).